An 86-amino-acid polypeptide reads, in one-letter code: Small ribosomal subunit protein bS20 (86 aa).

Positions 1–25 (MANIKSQIKRNKQNEKRHERNKAVK) are disordered. The segment covering 12 to 22 (KQNEKRHERNK) has biased composition (basic and acidic residues).

This sequence belongs to the bacterial ribosomal protein bS20 family.

Binds directly to 16S ribosomal RNA. The sequence is that of Small ribosomal subunit protein bS20 from Nocardioides sp. (strain ATCC BAA-499 / JS614).